The sequence spans 249 residues: Benzil reductase ((S)-benzoin forming) (249 aa).

NADP(+) is bound by residues Ile-6, Asn-87, Tyr-154, Lys-158, Val-189, and Thr-191. Tyr-154 functions as the Proton acceptor in the catalytic mechanism.

It belongs to the short-chain dehydrogenases/reductases (SDR) family.

It localises to the cytoplasm. It catalyses the reaction (S)-benzoin + NADP(+) = benzil + NADPH + H(+). The catalysed reaction is 2-hydroxy-1-phenyl-1-propanone + NADP(+) = 1-phenyl-1,2-propanedione + NADPH + H(+). Its activity is regulated as follows. Inhibited by Cibacron blue 3GA, a general SDR family inhibitor. Functionally, reduces benzil stereospecifically to (S)-benzoin. Can also reduce 1-phenyl-1,2-propanedione, 1,4-naphthoquinone, 1-(4-methyl-phenyl)-2-phenyl-ethane-1,2-dione, 1-(4-fluoro-phenyl)-2-phenyl-ethane-1,2-dione, methyl benzoylformate and p-nitrobenzaldehyde in decreasing order. In Bacillus cereus, this protein is Benzil reductase ((S)-benzoin forming).